We begin with the raw amino-acid sequence, 191 residues long: MNPMPLSPLFFATWLAENEDQLRPPVNNYCLYQGNDFILMAVGGPNERNDYHVNETEVCLQPSWCSREANEQEWFYQVKGDMLLRVVENNAFRDIPIKEGEMFLLPGNTPHNPVRFKDTIGLVMERQRPAGSRDRLRWYCTKGDHASPTIIREEVFHCSDLGTQLKPIIEQWQQDEDGRRCAECSCIADPK.

Residue R48 participates in O2 binding. Residues H52, E73, and H111 each coordinate Fe cation. A substrate-binding site is contributed by E73. Residues R115 and E125 each coordinate substrate.

This sequence belongs to the 3-HAO family. It depends on Fe(2+) as a cofactor.

It localises to the cytoplasm. The catalysed reaction is 3-hydroxyanthranilate + O2 = (2Z,4Z)-2-amino-3-carboxymuconate 6-semialdehyde. It functions in the pathway cofactor biosynthesis; NAD(+) biosynthesis; quinolinate from L-kynurenine: step 3/3. Catalyzes the oxidative ring opening of 3-hydroxyanthranilate to 2-amino-3-carboxymuconate semialdehyde, which spontaneously cyclizes to quinolinate. In Aspergillus clavatus (strain ATCC 1007 / CBS 513.65 / DSM 816 / NCTC 3887 / NRRL 1 / QM 1276 / 107), this protein is 3-hydroxyanthranilate 3,4-dioxygenase 2 (bna1-2).